The chain runs to 401 residues: Large ribosomal subunit protein uL4B (401 aa).

Over residues 351–373 (IKAKEKKPDDGKPKAKKPLDAKT) the composition is skewed to basic and acidic residues. The tract at residues 351–401 (IKAKEKKPDDGKPKAKKPLDAKTKMIKLAKAKKRQARAEAKTAEAKTAESK) is disordered. A compositionally biased stretch (basic residues) spans 374–385 (KMIKLAKAKKRQ). Positions 386–401 (ARAEAKTAEAKTAESK) are enriched in basic and acidic residues.

This sequence belongs to the universal ribosomal protein uL4 family. As to quaternary structure, component of the large ribosomal subunit.

It is found in the cytoplasm. Functionally, component of the large ribosomal subunit. The ribosome is a large ribonucleoprotein complex responsible for the synthesis of proteins in the cell. This chain is Large ribosomal subunit protein uL4B (rpl4-b), found in Xenopus laevis (African clawed frog).